Here is a 152-residue protein sequence, read N- to C-terminus: UPF0266 membrane protein YobD (152 aa).

Helical transmembrane passes span 6 to 26 (LVLI…QFIM), 45 to 65 (VDSV…VTSH), and 67 to 87 (AQMT…IFWI).

The protein belongs to the UPF0266 family.

Its subcellular location is the cell inner membrane. The protein is UPF0266 membrane protein YobD of Salmonella enteritidis PT4 (strain P125109).